Here is a 505-residue protein sequence, read N- to C-terminus: Xylose import ATP-binding protein XylG (505 aa).

ABC transporter domains are found at residues 6–243 and 262–505; these read LEMR…VGRE and VKNY…TGGK. 38–45 contributes to the ATP binding site; it reads GENGAGKS.

It belongs to the ABC transporter superfamily. Xylose importer (TC 3.A.1.2.4) family. In terms of assembly, the complex is composed of two ATP-binding proteins (XylG), two transmembrane proteins (XylH) and a solute-binding protein (XylF).

The protein localises to the cell membrane. The enzyme catalyses D-xylose(out) + ATP + H2O = D-xylose(in) + ADP + phosphate + H(+). In terms of biological role, part of the ABC transporter complex XylFGH involved in xylose import. Responsible for energy coupling to the transport system. This chain is Xylose import ATP-binding protein XylG, found in Thermoanaerobacter pseudethanolicus (strain ATCC 33223 / 39E) (Clostridium thermohydrosulfuricum).